A 302-amino-acid chain; its full sequence is Sulfate adenylyltransferase subunit 2 (302 aa).

Belongs to the PAPS reductase family. CysD subfamily. As to quaternary structure, heterodimer composed of CysD, the smaller subunit, and CysN.

It carries out the reaction sulfate + ATP + H(+) = adenosine 5'-phosphosulfate + diphosphate. Its pathway is sulfur metabolism; hydrogen sulfide biosynthesis; sulfite from sulfate: step 1/3. In terms of biological role, with CysN forms the ATP sulfurylase (ATPS) that catalyzes the adenylation of sulfate producing adenosine 5'-phosphosulfate (APS) and diphosphate, the first enzymatic step in sulfur assimilation pathway. APS synthesis involves the formation of a high-energy phosphoric-sulfuric acid anhydride bond driven by GTP hydrolysis by CysN coupled to ATP hydrolysis by CysD. The polypeptide is Sulfate adenylyltransferase subunit 2 (Escherichia coli O1:K1 / APEC).